The primary structure comprises 375 residues: MAIVSSKSPDPAERRSQAKTKPSVSEPQDSLVRPQAAPEESQRPEDQIRPQRLADYIGQPELKDVLGIAIAAAKSRQESLDHLLLYGPPGLGKTTMALVLATEMGVQCRITTAPALERPRDIVGLLVNLQPGDVLFIDEIHRLPKVTEEILYPAMEDFRLDITIGKGQSARTRSITLQPFTLVGATTQIGALTSPLRDRFGLVQRLRFYEVEALTDIVQRTARLLNTPLDQAGAEEIAKRSRGTPRIANRLLRRVRDYAAVKAPGPITGAIAATALELYNVDPCGLDWTDRRLLSHLIENFGGGPVGLETLAAATGEDAQTVEEVYEPYLLQIGYLQRTPRGRVATPAAWRHLGYEPPQASGQLTLQQLLTEPET.

A disordered region spans residues 1–50; the sequence is MAIVSSKSPDPAERRSQAKTKPSVSEPQDSLVRPQAAPEESQRPEDQIRP. The large ATPase domain (RuvB-L) stretch occupies residues 13-209; sequence ERRSQAKTKP…FGLVQRLRFY (197 aa). A compositionally biased stretch (polar residues) spans 19–28; sequence KTKPSVSEPQ. Residues 40-49 show a composition bias toward basic and acidic residues; the sequence is ESQRPEDQIR. Residues Ile-48, Arg-49, Gly-90, Lys-93, Thr-94, Thr-95, 156-158, Arg-199, Tyr-209, and Arg-246 contribute to the ATP site; that span reads EDF. Thr-94 contributes to the Mg(2+) binding site. The interval 210-280 is small ATPAse domain (RuvB-S); that stretch reads EVEALTDIVQ…IAATALELYN (71 aa). The interval 283 to 375 is head domain (RuvB-H); that stretch reads PCGLDWTDRR…LQQLLTEPET (93 aa). DNA-binding residues include Arg-338 and Arg-343.

The protein belongs to the RuvB family. As to quaternary structure, homohexamer. Forms an RuvA(8)-RuvB(12)-Holliday junction (HJ) complex. HJ DNA is sandwiched between 2 RuvA tetramers; dsDNA enters through RuvA and exits via RuvB. An RuvB hexamer assembles on each DNA strand where it exits the tetramer. Each RuvB hexamer is contacted by two RuvA subunits (via domain III) on 2 adjacent RuvB subunits; this complex drives branch migration. In the full resolvosome a probable DNA-RuvA(4)-RuvB(12)-RuvC(2) complex forms which resolves the HJ.

It localises to the cytoplasm. The enzyme catalyses ATP + H2O = ADP + phosphate + H(+). In terms of biological role, the RuvA-RuvB-RuvC complex processes Holliday junction (HJ) DNA during genetic recombination and DNA repair, while the RuvA-RuvB complex plays an important role in the rescue of blocked DNA replication forks via replication fork reversal (RFR). RuvA specifically binds to HJ cruciform DNA, conferring on it an open structure. The RuvB hexamer acts as an ATP-dependent pump, pulling dsDNA into and through the RuvAB complex. RuvB forms 2 homohexamers on either side of HJ DNA bound by 1 or 2 RuvA tetramers; 4 subunits per hexamer contact DNA at a time. Coordinated motions by a converter formed by DNA-disengaged RuvB subunits stimulates ATP hydrolysis and nucleotide exchange. Immobilization of the converter enables RuvB to convert the ATP-contained energy into a lever motion, pulling 2 nucleotides of DNA out of the RuvA tetramer per ATP hydrolyzed, thus driving DNA branch migration. The RuvB motors rotate together with the DNA substrate, which together with the progressing nucleotide cycle form the mechanistic basis for DNA recombination by continuous HJ branch migration. Branch migration allows RuvC to scan DNA until it finds its consensus sequence, where it cleaves and resolves cruciform DNA. The polypeptide is Holliday junction branch migration complex subunit RuvB (Synechococcus elongatus (strain ATCC 33912 / PCC 7942 / FACHB-805) (Anacystis nidulans R2)).